Reading from the N-terminus, the 355-residue chain is Heterogeneous nuclear ribonucleoprotein D0 (355 aa).

A disordered region spans residues 1-91 (MSEEQFGGDG…SSPRHTEAAA (91 aa)). N-acetylserine is present on serine 2. The segment covering 11–43 (AAAAATAAVGGSAGEQEGAMVAAAAQGPAAAAG) has biased composition (low complexity). Over residues 44–58 (SGSGGGGSAAGGTEG) the composition is skewed to gly residues. Over residues 64-73 (EGAKIDASKN) the composition is skewed to basic and acidic residues. The residue at position 71 (serine 71) is a Phosphoserine. Lysine 72 is covalently cross-linked (Glycyl lysine isopeptide (Lys-Gly) (interchain with G-Cter in SUMO2)). Phosphoserine occurs at positions 80, 82, and 83. RRM domains lie at 97–179 (WKMF…KTKE) and 182–261 (KKIF…MSKE). Residue lysine 119 is modified to N6-methyllysine. The residue at position 127 (threonine 127) is a Phosphothreonine. Lysine 129 participates in a covalent cross-link: Glycyl lysine isopeptide (Lys-Gly) (interchain with G-Cter in SUMO2). N6-acetyllysine is present on lysine 165. The residue at position 190 (serine 190) is a Phosphoserine. The residue at position 193 (threonine 193) is a Phosphothreonine. Lysine 197 participates in a covalent cross-link: Glycyl lysine isopeptide (Lys-Gly) (interchain with G-Cter in SUMO2). An N6-acetyllysine mark is found at lysine 243 and lysine 251. Omega-N-methylarginine occurs at positions 261 and 263. A Phosphoserine modification is found at serine 271. Omega-N-methylarginine occurs at positions 272, 278, 280, and 282. Arginine 345 carries the asymmetric dimethylarginine; alternate modification. A Dimethylated arginine; alternate modification is found at arginine 345. Position 345 is an omega-N-methylarginine; alternate (arginine 345).

In terms of assembly, identified in a IGF2BP1-dependent mRNP granule complex containing untranslated mRNAs. Part of a complex associated with the FOS mCRD domain and consisting of PABPC1, PAIP1, CSDE1/UNR and SYNCRIP. Interacts with IGF2BP2. Interacts with GTPBP1. Interacts with EIF4G1; the interaction requires RNA. Interacts with EIF3B and RPS3. Post-translationally, methylated by PRMT1, in an insulin-dependent manner. The PRMT1-mediated methylation regulates its phosphorylation. In terms of processing, arg-345 is dimethylated, probably to asymmetric dimethylarginine.

It is found in the nucleus. The protein localises to the cytoplasm. Binds with high affinity to RNA molecules that contain AU-rich elements (AREs) found within the 3'-UTR of many proto-oncogenes and cytokine mRNAs. Also binds to double- and single-stranded DNA sequences in a specific manner and functions a transcription factor. Each of the RNA-binding domains specifically can bind solely to a single-stranded non-monotonous 5'-UUAG-3' sequence and also weaker to the single-stranded 5'-TTAGGG-3' telomeric DNA repeat. Binds RNA oligonucleotides with 5'-UUAGGG-3' repeats more tightly than the telomeric single-stranded DNA 5'-TTAGGG-3' repeats. Binding of RRM1 to DNA inhibits the formation of DNA quadruplex structure which may play a role in telomere elongation. May be involved in translationally coupled mRNA turnover. Implicated with other RNA-binding proteins in the cytoplasmic deadenylation/translational and decay interplay of the FOS mRNA mediated by the major coding-region determinant of instability (mCRD) domain. May play a role in the regulation of the rhythmic expression of circadian clock core genes. Directly binds to the 3'UTR of CRY1 mRNA and induces CRY1 rhythmic translation. May also be involved in the regulation of PER2 translation. This chain is Heterogeneous nuclear ribonucleoprotein D0 (Hnrnpd), found in Mus musculus (Mouse).